The sequence spans 533 residues: MQTKETTNEGLKRAYKLTLTAKEIDAKIDAEVKKVAPQVRMPGFRPGKVPANLVRKMHGEQMHAQVINDSIRDSVDALIKEKELRPAMQPKIDLNEDYEQGKDAVVSVSLEILPKVEAPSIDDLKLERLTVPVSDEQVMETIERIAGQNKSYKDAAKTRKAADGDQLIIDFTGSVDGVEFEGGKAEDAPLVLGSGTFIPGFEEQLKGVKTGDEKTITVTFPKDYQAENLAGKEAQFDVKVKQVKVETDTTIDDEFAANLGLENLDKLKELIRGQLEQETNGLTRTAMKRSLLDQLAAGHDFPVPEGMVDAEFEQIWNQLQQEAAQEEDPDKALKEIEAEKDDYRAIAERRVRLGLLLSEIGQANGVEISQQEMSMLTMQAAQQYREEDRERFMQFIQQDPMAAAQLRAPLYEDKVVDFLFDKAEVTDREVTREELEAAIEAEAEEEKKPAAKKKAPAKKAEPKKAAAKKAPAKKAPAKKAAAKDGDEKPAAKKAPAKKAPAKKASTKKPAEKKAPAKKPAAKKAPAKKPAAKK.

A PPIase FKBP-type domain is found at 164–249; that stretch reads GDQLIIDFTG…VKQVKVETDT (86 aa). The disordered stretch occupies residues 436–533; it reads EAAIEAEAEE…APAKKPAAKK (98 aa). A compositionally biased stretch (basic residues) spans 465–477; sequence AAAKKAPAKKAPA. Residues 481-490 are compositionally biased toward basic and acidic residues; it reads AAKDGDEKPA. 2 stretches are compositionally biased toward basic residues: residues 494-506 and 515-533; these read APAKKAPAKKAST and PAKKPAAKKAPAKKPAAKK.

The protein belongs to the FKBP-type PPIase family. Tig subfamily.

Its subcellular location is the cytoplasm. The enzyme catalyses [protein]-peptidylproline (omega=180) = [protein]-peptidylproline (omega=0). Functionally, involved in protein export. Acts as a chaperone by maintaining the newly synthesized protein in an open conformation. Functions as a peptidyl-prolyl cis-trans isomerase. The chain is Trigger factor from Erythrobacter litoralis (strain HTCC2594).